The chain runs to 249 residues: Type-1Aa cytolytic delta-endotoxin (249 aa).

The protein belongs to the cyt1/cyt2 endotoxin family. Active after proteolytic processing.

Kills the larvae of dipteran insects by making pores in the epithelial cell membrane of the insect midgut. Acts on mosquitos and black flies. In Bacillus thuringiensis subsp. morrisoni, this protein is Type-1Aa cytolytic delta-endotoxin (cyt1Aa).